We begin with the raw amino-acid sequence, 171 residues long: Co-chaperone protein HscB (171 aa).

Residues 2-74 (DYFTLFGLPA…LTRAEYLLSL (73 aa)) form the J domain.

Belongs to the HscB family. Interacts with HscA and stimulates its ATPase activity. Interacts with IscU.

Functionally, co-chaperone involved in the maturation of iron-sulfur cluster-containing proteins. Seems to help targeting proteins to be folded toward HscA. The polypeptide is Co-chaperone protein HscB (Salmonella schwarzengrund (strain CVM19633)).